A 658-amino-acid polypeptide reads, in one-letter code: NADPH-dependent diflavin oxidoreductase 1 (658 aa).

Residues 16 to 160 (LTILYMTQTG…ELGPWMNRFW (145 aa)) form the Flavodoxin-like domain. FMN contacts are provided by residues 22–27 (TQTGTS), 69–72 (STTG), 107–116 (LGDSTYPRFC), and D142. Positions 215–502 (QGWSISILDK…IKPGYLTLPP (288 aa)) constitute an FAD-binding FR-type domain. FAD-binding positions include R400, 430 to 433 (REFS), and 474 to 477 (GLCT). NADP(+)-binding positions include T514, 574-575 (SR), and 580-584 (KTYVQ). W657 is a binding site for FAD.

This sequence belongs to the NADPH-dependent diflavin oxidoreductase NDOR1 family. The protein in the N-terminal section; belongs to the flavodoxin family. It in the C-terminal section; belongs to the flavoprotein pyridine nucleotide cytochrome reductase family. In terms of assembly, interacts with DRE2; as part of the cytosolic iron-sulfur (Fe-S) protein assembly (CIA) machinery. Requires FAD as cofactor. It depends on FMN as a cofactor.

It is found in the cytoplasm. The protein resides in the mitochondrion. The enzyme catalyses 2 oxidized [2Fe-2S]-[protein] + NADPH = 2 reduced [2Fe-2S]-[protein] + NADP(+) + H(+). Its function is as follows. NADPH-dependent reductase which is a central component of the cytosolic iron-sulfur (Fe-S) protein assembly (CIA) machinery. Transfers electrons from NADPH via its FAD and FMN prosthetic groups to the [2Fe-2S] cluster of DRE2, another key component of the CIA machinery. In turn, this reduced cluster provides electrons for assembly of cytosolic iron-sulfur cluster proteins. Positively controls H(2)O(2)-induced cell death. This Mycosarcoma maydis (Corn smut fungus) protein is NADPH-dependent diflavin oxidoreductase 1.